We begin with the raw amino-acid sequence, 78 residues long: Sec-independent protein translocase protein TatA (78 aa).

The chain crosses the membrane as a helical span at residues 1 to 21; it reads MFGRIGLPEILLILAIALIIF. The disordered stretch occupies residues 50–78; that stretch reads EVNEVEEEVKENKSSDVKENEDNKTEKST. The span at 59 to 78 shows a compositional bias: basic and acidic residues; the sequence is KENKSSDVKENEDNKTEKST.

This sequence belongs to the TatA/E family. As to quaternary structure, forms a complex with TatC.

It localises to the cell membrane. In terms of biological role, part of the twin-arginine translocation (Tat) system that transports large folded proteins containing a characteristic twin-arginine motif in their signal peptide across membranes. TatA could form the protein-conducting channel of the Tat system. The polypeptide is Sec-independent protein translocase protein TatA (Natranaerobius thermophilus (strain ATCC BAA-1301 / DSM 18059 / JW/NM-WN-LF)).